The primary structure comprises 386 residues: Phosphoglycerate kinase (386 aa).

Residues 21–23, arginine 36, 59–62, arginine 113, and arginine 146 contribute to the substrate site; these read DLN and HLGR. ATP is bound by residues lysine 197, glutamate 314, and 340-343; that span reads GGDT.

It belongs to the phosphoglycerate kinase family. As to quaternary structure, monomer.

The protein localises to the cytoplasm. The catalysed reaction is (2R)-3-phosphoglycerate + ATP = (2R)-3-phospho-glyceroyl phosphate + ADP. It functions in the pathway carbohydrate degradation; glycolysis; pyruvate from D-glyceraldehyde 3-phosphate: step 2/5. This chain is Phosphoglycerate kinase, found in Azotobacter vinelandii (strain DJ / ATCC BAA-1303).